The following is a 376-amino-acid chain: UDP-N-acetylglucosamine--N-acetylmuramyl-(pentapeptide) pyrophosphoryl-undecaprenol N-acetylglucosamine transferase (376 aa).

Residues 11-13 (TGG), asparagine 117, arginine 160, serine 208, and glutamine 310 contribute to the UDP-N-acetyl-alpha-D-glucosamine site.

Belongs to the glycosyltransferase 28 family. MurG subfamily.

It localises to the cell inner membrane. It carries out the reaction di-trans,octa-cis-undecaprenyl diphospho-N-acetyl-alpha-D-muramoyl-L-alanyl-D-glutamyl-meso-2,6-diaminopimeloyl-D-alanyl-D-alanine + UDP-N-acetyl-alpha-D-glucosamine = di-trans,octa-cis-undecaprenyl diphospho-[N-acetyl-alpha-D-glucosaminyl-(1-&gt;4)]-N-acetyl-alpha-D-muramoyl-L-alanyl-D-glutamyl-meso-2,6-diaminopimeloyl-D-alanyl-D-alanine + UDP + H(+). It functions in the pathway cell wall biogenesis; peptidoglycan biosynthesis. Cell wall formation. Catalyzes the transfer of a GlcNAc subunit on undecaprenyl-pyrophosphoryl-MurNAc-pentapeptide (lipid intermediate I) to form undecaprenyl-pyrophosphoryl-MurNAc-(pentapeptide)GlcNAc (lipid intermediate II). This chain is UDP-N-acetylglucosamine--N-acetylmuramyl-(pentapeptide) pyrophosphoryl-undecaprenol N-acetylglucosamine transferase, found in Rickettsia rickettsii (strain Iowa).